We begin with the raw amino-acid sequence, 207 residues long: Small ribosomal subunit protein uS4 (207 aa).

Residues 26 to 53 (KPFDVKTKKHAKAPGQHGQARGKQSEYS) are disordered. One can recognise an S4 RNA-binding domain in the interval 97–159 (SRLDNVVYRM…AKQQLRIKNA (63 aa)).

This sequence belongs to the universal ribosomal protein uS4 family. Part of the 30S ribosomal subunit. Contacts protein S5. The interaction surface between S4 and S5 is involved in control of translational fidelity.

One of the primary rRNA binding proteins, it binds directly to 16S rRNA where it nucleates assembly of the body of the 30S subunit. Functionally, with S5 and S12 plays an important role in translational accuracy. The polypeptide is Small ribosomal subunit protein uS4 (Acinetobacter baylyi (strain ATCC 33305 / BD413 / ADP1)).